The sequence spans 618 residues: Membrane protein insertase YidC (618 aa).

A run of 6 helical transmembrane segments spans residues 3–23 (KNTI…SFLS), 363–383 (WGLS…IVVF), 439–459 (LPML…PSAI), 478–498 (FITF…FCLL), 520–540 (PQMA…LFVL), and 545–565 (SGLN…MIIL).

This sequence belongs to the OXA1/ALB3/YidC family. Type 1 subfamily. As to quaternary structure, interacts with the Sec translocase complex via SecD. Specifically interacts with transmembrane segments of nascent integral membrane proteins during membrane integration.

It localises to the cell membrane. Functionally, required for the insertion and/or proper folding and/or complex formation of integral membrane proteins into the membrane. Involved in integration of membrane proteins that insert both dependently and independently of the Sec translocase complex, as well as at least some lipoproteins. Aids folding of multispanning membrane proteins. This Bacteroides fragilis (strain YCH46) protein is Membrane protein insertase YidC.